We begin with the raw amino-acid sequence, 351 residues long: Phosphoribosylformylglycinamidine cyclo-ligase (351 aa).

This sequence belongs to the AIR synthase family.

The protein resides in the cytoplasm. The catalysed reaction is 2-formamido-N(1)-(5-O-phospho-beta-D-ribosyl)acetamidine + ATP = 5-amino-1-(5-phospho-beta-D-ribosyl)imidazole + ADP + phosphate + H(+). It functions in the pathway purine metabolism; IMP biosynthesis via de novo pathway; 5-amino-1-(5-phospho-D-ribosyl)imidazole from N(2)-formyl-N(1)-(5-phospho-D-ribosyl)glycinamide: step 2/2. This Lysinibacillus sphaericus (strain C3-41) protein is Phosphoribosylformylglycinamidine cyclo-ligase.